The sequence spans 202 residues: Thymidylate kinase (202 aa).

7-14 (GTEGVGKT) is an ATP binding site.

Belongs to the thymidylate kinase family.

It carries out the reaction dTMP + ATP = dTDP + ADP. In terms of biological role, phosphorylation of dTMP to form dTDP in both de novo and salvage pathways of dTTP synthesis. The protein is Thymidylate kinase of Acinetobacter baylyi (strain ATCC 33305 / BD413 / ADP1).